Consider the following 484-residue polypeptide: Glutamate--tRNA ligase (484 aa).

Residues 11-21 carry the 'HIGH' region motif; the sequence is PSPTGYLHIGN. Positions 252–256 match the 'KMSKS' region motif; sequence KLSKR. Lys255 is an ATP binding site.

It belongs to the class-I aminoacyl-tRNA synthetase family. Glutamate--tRNA ligase type 1 subfamily. Monomer.

The protein resides in the cytoplasm. It catalyses the reaction tRNA(Glu) + L-glutamate + ATP = L-glutamyl-tRNA(Glu) + AMP + diphosphate. Its function is as follows. Catalyzes the attachment of glutamate to tRNA(Glu) in a two-step reaction: glutamate is first activated by ATP to form Glu-AMP and then transferred to the acceptor end of tRNA(Glu). This Staphylococcus aureus (strain bovine RF122 / ET3-1) protein is Glutamate--tRNA ligase.